Here is an 86-residue protein sequence, read N- to C-terminus: Conotoxin Lt15a (86 aa).

An N-terminal signal peptide occupies residues 1–23 (MEKLTILILVATVLLAIQVLVQS). A propeptide spanning residues 24-49 (DGENPVKGRVKHYAAKRFSALFRGPR) is cleaved from the precursor.

This sequence belongs to the conotoxin O2 superfamily. Contains 4 disulfide bonds. Expressed by the venom duct.

The protein resides in the secreted. The chain is Conotoxin Lt15a from Conus litteratus (Lettered cone).